Consider the following 474-residue polypeptide: Transcription factor fscB (474 aa).

Disordered stretches follow at residues 114-153 (VDELELSSDTRSSLSPSSHNTTTGHETGLSSVTPPQSYWT) and 207-242 (GKEVTKRNKRSRTEAQEASNSPCASSTADSQTNPAP). A compositionally biased stretch (low complexity) spans 120 to 131 (SSDTRSSLSPSS). Residues 132-153 (HNTTTGHETGLSSVTPPQSYWT) are compositionally biased toward polar residues. Residues 207–221 (GKEVTKRNKRSRTEA) are compositionally biased toward basic and acidic residues. Residues 222–240 (QEASNSPCASSTADSQTNP) show a composition bias toward polar residues.

The protein belongs to the POU transcription factor family. Class-3 subfamily.

The protein localises to the nucleus. Functionally, transcription factor; part of the fragmented gene cluster that mediates the biosynthesis of fusarochromene, a tryptophan-derived metabolite closely related to a group of mycotoxins including fusarochromanone. The chain is Transcription factor fscB from Fusarium equiseti (Fusarium scirpi).